The following is a 2804-amino-acid chain: Nipped-B-like protein (2804 aa).

2 stretches are compositionally biased toward polar residues: residues 128–173 and 191–208; these read LSQN…QNSP and HPSSYTTHPQMQQASVSS. The segment at 128–340 is disordered; the sequence is LSQNSMHSSP…LGKDEKEQSE (213 aa). Phosphoserine occurs at positions 150 and 162. Residues 234–249 show a composition bias toward basic and acidic residues; the sequence is HHADNPRHGSSEDYLH. Phosphoserine is present on residues serine 243, serine 256, serine 274, serine 280, serine 284, serine 301, serine 306, and serine 318. Residues 331–340 are compositionally biased toward basic and acidic residues; it reads LGKDEKEQSE. A Phosphoserine modification is found at serine 350. Residues 482–500 show a composition bias toward basic and acidic residues; it reads RESAIERERFSKEVQDKDK. Positions 482 to 946 are disordered; the sequence is RESAIERERF…NKAEFPSYLL (465 aa). The span at 523–534 shows a compositional bias: polar residues; it reads PASQETGSTGNG. Basic and acidic residues-rich tracts occupy residues 562–572, 593–663, 672–685, and 694–939; these read DSIKKPEEIKQ, PENH…ECKQ, KQNENRLSDTKPND, and ETTK…DNKA. Phosphothreonine occurs at positions 713 and 746. Serine 912 bears the Phosphoserine mark. The short motif at 996–1009 is the PxVxL motif element; it reads NKGAKPVVVLQKLS. Disordered regions lie at residues 1017-1047 and 1060-1191; these read IKDREDKSRSSLKPIKNKPSKSNKGSIDQSV and ESTM…LTPE. An N6-acetyllysine modification is found at lysine 1082. Serine 1089, serine 1090, and serine 1096 each carry phosphoserine. Residues 1089–1100 are compositionally biased toward acidic residues; that stretch reads SSDEDNDSDEAF. Over residues 1109-1139 the composition is skewed to basic and acidic residues; that stretch reads KDDDKAWEYEERDRRSSGDHRRSGHSHEGRR. Phosphoserine is present on residues serine 1150, serine 1152, and serine 1154. Tyrosine 1159 is modified (phosphotyrosine). Serine 1160 carries the phosphoserine modification. Positions 1171–1182 are enriched in basic residues; the sequence is KMKKKEKQKKRK. Position 1189 is a phosphothreonine (threonine 1189). Residue serine 1197 is modified to Phosphoserine. The segment at 1691 to 1710 is disordered; that stretch reads AMKSQKDEESSEGTHHAKEI. HEAT repeat units lie at residues 1767–1805, 1843–1881, 1945–1984, 2227–2267, and 2313–2351; these read AQSFDIYLTQILRVLGENAIAVRTKAMKCLSEVVAVDPS, PQLAEQYYDMLIERILDTGISVRKRVIKILRDICIEQPT, YDWFEQLLQNLLKSEEDSSYKPVKKACTQLVDNLVEHILK, VNLK…LKEM, and LIHPVQCVPYLIAMGTDPEPAMRNKADQQLVEIDKKYAG. Over residues 2473–2489 the composition is skewed to basic and acidic residues; the sequence is VKDKRKERKSSPSKENE. 2 disordered regions span residues 2473-2520 and 2651-2696; these read VKDK…DDIN and TSLL…DSTE. Serine 2493, serine 2509, serine 2511, serine 2513, serine 2515, serine 2652, and serine 2658 each carry phosphoserine. Over residues 2510–2519 the composition is skewed to acidic residues; it reads DSDSDSEDDI. Residue threonine 2667 is modified to Phosphothreonine. A Phosphoserine modification is found at serine 2672.

The protein belongs to the SCC2/Nipped-B family. As to quaternary structure, heterodimerizes with MAU2/SCC4 to form the cohesin loading complex. The NIPBL-MAU2 heterodimer interacts with the cohesin complex composed of SMC1A/B and SMC3 heterodimer, RAD21 and STAG1/SA1. NIPBL directly contacts all members of the complex, RAD21, SMC1A/B, SMC3 and STAG1. Interacts directly (via PxVxL motif) with CBX5. Interacts with ZNF609 (via N-terminus). Interacts with the multiprotein complex Integrator. Interacts (via PxVxL motif) with CBX3. Interacts with BRD4. As to expression, widely expressed. Highly expressed in heart, skeletal muscle, fetal and adult liver, fetal and adult kidney. Expressed at intermediates level in thymus, placenta, peripheral leukocyte and small intestine. Weakly or not expressed in brain, colon, spleen and lung.

It is found in the nucleus. The protein localises to the chromosome. Its function is as follows. Plays an important role in the loading of the cohesin complex on to DNA. Forms a heterodimeric complex (also known as cohesin loading complex) with MAU2/SCC4 which mediates the loading of the cohesin complex onto chromatin. Plays a role in cohesin loading at sites of DNA damage. Its recruitment to double-strand breaks (DSBs) sites occurs in a CBX3-, RNF8- and RNF168-dependent manner whereas its recruitment to UV irradiation-induced DNA damage sites occurs in a ATM-, ATR-, RNF8- and RNF168-dependent manner. Along with ZNF609, promotes cortical neuron migration during brain development by regulating the transcription of crucial genes in this process. Preferentially binds promoters containing paused RNA polymerase II. Up-regulates the expression of SEMA3A, NRP1, PLXND1 and GABBR2 genes, among others. This Homo sapiens (Human) protein is Nipped-B-like protein (NIPBL).